We begin with the raw amino-acid sequence, 132 residues long: Phosphoribosyl-AMP cyclohydrolase (132 aa).

Asp-76 is a binding site for Mg(2+). Cys-77 contacts Zn(2+). Residues Asp-78 and Asp-80 each contribute to the Mg(2+) site. The Zn(2+) site is built by Cys-93 and Cys-100.

It belongs to the PRA-CH family. In terms of assembly, homodimer. The cofactor is Mg(2+). It depends on Zn(2+) as a cofactor.

The protein localises to the cytoplasm. It carries out the reaction 1-(5-phospho-beta-D-ribosyl)-5'-AMP + H2O = 1-(5-phospho-beta-D-ribosyl)-5-[(5-phospho-beta-D-ribosylamino)methylideneamino]imidazole-4-carboxamide. It functions in the pathway amino-acid biosynthesis; L-histidine biosynthesis; L-histidine from 5-phospho-alpha-D-ribose 1-diphosphate: step 3/9. In terms of biological role, catalyzes the hydrolysis of the adenine ring of phosphoribosyl-AMP. This chain is Phosphoribosyl-AMP cyclohydrolase, found in Methanobrevibacter smithii (strain ATCC 35061 / DSM 861 / OCM 144 / PS).